The following is a 612-amino-acid chain: Serine/threonine-protein kinase Nek1 (612 aa).

The Protein kinase domain occupies 4 to 258; that stretch reads YEFLEQIGKG…ASDLLRHPHL (255 aa). Residues 10–18 and lysine 33 each bind ATP; that span reads IGKGSFGSA. Aspartate 129 serves as the catalytic Proton acceptor. Over residues 503–513 the composition is skewed to polar residues; sequence ISDGSSSSDQN. The segment at 503–534 is disordered; that stretch reads ISDGSSSSDQNATAGASSHTTSSSSRRCRFDP. Low complexity predominate over residues 514–527; sequence ATAGASSHTTSSSS.

This sequence belongs to the protein kinase superfamily. NEK Ser/Thr protein kinase family. NIMA subfamily.

The catalysed reaction is L-seryl-[protein] + ATP = O-phospho-L-seryl-[protein] + ADP + H(+). It carries out the reaction L-threonyl-[protein] + ATP = O-phospho-L-threonyl-[protein] + ADP + H(+). Its function is as follows. May be involved in plant development processes. The chain is Serine/threonine-protein kinase Nek1 (NEK1) from Arabidopsis thaliana (Mouse-ear cress).